The chain runs to 426 residues: Glutamate-1-semialdehyde 2,1-aminomutase (426 aa).

The residue at position 265 (K265) is an N6-(pyridoxal phosphate)lysine.

Belongs to the class-III pyridoxal-phosphate-dependent aminotransferase family. HemL subfamily. In terms of assembly, homodimer. It depends on pyridoxal 5'-phosphate as a cofactor.

It is found in the cytoplasm. It carries out the reaction (S)-4-amino-5-oxopentanoate = 5-aminolevulinate. The protein operates within porphyrin-containing compound metabolism; protoporphyrin-IX biosynthesis; 5-aminolevulinate from L-glutamyl-tRNA(Glu): step 2/2. The protein is Glutamate-1-semialdehyde 2,1-aminomutase of Escherichia coli O139:H28 (strain E24377A / ETEC).